The primary structure comprises 51 residues: Small ribosomal subunit protein eS31 (51 aa).

Zn(2+)-binding residues include cysteine 21, cysteine 24, cysteine 39, and cysteine 42. The C4-type zinc finger occupies 21 to 42 (CVRCSNGVFMADHGDRYACGKC).

Belongs to the eukaryotic ribosomal protein eS31 family. As to quaternary structure, part of the 30S ribosomal subunit. The cofactor is Zn(2+).

The chain is Small ribosomal subunit protein eS31 from Methanothermobacter thermautotrophicus (strain ATCC 29096 / DSM 1053 / JCM 10044 / NBRC 100330 / Delta H) (Methanobacterium thermoautotrophicum).